Reading from the N-terminus, the 331-residue chain is MEYTSIADTGIEASRIGLGTWAIGGTMWGGTDEKTSIETIRAALDQGITLIDTAPAYGFGQSEEIVGKAIKEYGKRDQVILATKTALDWKNNQLFRHANRARIVEEVENSLKRLQTDYIDLYQVHWPDPLVPIEETAEVMKELYDAGKIRAIGVSNFSIEQMDTFRAVAPLHTIQPPYNLFEREMEESVLPYAKDNKITTLLYGSLCRGLLTGKMTEEYTFEGDDLRNHDPKFQKPRFKEYLSAVNQLDKLAKTRYGKSVIHLAVRWILDQPGADIALWGARKPGQLEALSEITGWTLNSEDQKDINTILENTISDPVGPEFMAPPTREEI.

Residues 20–21 and D52 each bind NADP(+); that span reads TW. The active-site Proton donor is the Y57. NADP(+)-binding positions include Q175, 203 to 208, K214, R227, 280 to 282, and Q286; these read YGSLCR and GAR.

This sequence belongs to the aldo/keto reductase family. Aldo/keto reductase 11 subfamily. Monomer.

Its function is as follows. Aldo-keto reductase (AKR) that displays broad substrate specificity in vitro. Is able to reduce the standard AKR substrates DL-glyceraldehyde, D-erythrose, methylglyoxal, p-nitrobenzaldehyde, benzaldehyde and butyraldehyde, in the presence of NADPH. Cannot use NADH as a cosubstrate. Does not act on glucose, 2-pyridine carboxyaldehyde, fructose and xylose. The physiological function of this enzyme is not clear. May play a role in bacterial stress response and/or in detoxification of reactive aldehydes. In Bacillus subtilis (strain 168), this protein is Aldo-keto reductase YhdN (yhdN).